The chain runs to 380 residues: SAM and SH3 domain-containing protein 3 (380 aa).

Residues 1–76 form a disordered region; the sequence is MLRRKPSNAS…KSGKKLGKKW (76 aa). Positions 22–41 are enriched in low complexity; that stretch reads LQRSSSFKDFAKSKPSSPVV. A phosphoserine mark is found at Ser27, Ser34, and Ser42. At Thr61 the chain carries Phosphothreonine. Ser97 is subject to Phosphoserine. Disordered stretches follow at residues 98 to 174, 237 to 256, and 318 to 380; these read EEMA…TGPF, VGHA…KPKT, and TGSE…AGAP. At Thr103 the chain carries Phosphothreonine. Ser110 bears the Phosphoserine mark. Thr112 bears the Phosphothreonine mark. Ser113 carries the phosphoserine modification. Position 116 is a phosphotyrosine (Tyr116). Residue Ser120 is modified to Phosphoserine. Polar residues predominate over residues 143-152; that stretch reads RQASTGSELC. Low complexity predominate over residues 153-164; sequence SPSPGSGSFGEE. Residues 173 to 234 enclose the SH3 domain; it reads PFCGRARVHT…KFIYVDVLPE (62 aa). A compositionally biased stretch (basic residues) spans 241 to 255; it reads RPSRRQSKGKRPKPK. The SAM domain maps to 252–316; it reads PKPKTLHELL…LTAAELLLDY (65 aa). Thr318 bears the Phosphothreonine mark. Acidic residues predominate over residues 318-327; that stretch reads TGSEEAEEGA. Ser320 carries the post-translational modification Phosphoserine.

May function as a signaling adapter protein in lymphocytes. This Homo sapiens (Human) protein is SAM and SH3 domain-containing protein 3 (SASH3).